The following is a 180-amino-acid chain: NAD(P)H-quinone oxidoreductase subunit I, chloroplastic (180 aa).

2 4Fe-4S ferredoxin-type domains span residues 55–84 (GRIH…VDWR) and 95–124 (LNYS…MTEE). Positions 64, 67, 70, 74, 104, 107, 110, and 114 each coordinate [4Fe-4S] cluster.

Belongs to the complex I 23 kDa subunit family. As to quaternary structure, NDH is composed of at least 16 different subunits, 5 of which are encoded in the nucleus. [4Fe-4S] cluster serves as cofactor.

Its subcellular location is the plastid. It localises to the chloroplast thylakoid membrane. It carries out the reaction a plastoquinone + NADH + (n+1) H(+)(in) = a plastoquinol + NAD(+) + n H(+)(out). It catalyses the reaction a plastoquinone + NADPH + (n+1) H(+)(in) = a plastoquinol + NADP(+) + n H(+)(out). Its function is as follows. NDH shuttles electrons from NAD(P)H:plastoquinone, via FMN and iron-sulfur (Fe-S) centers, to quinones in the photosynthetic chain and possibly in a chloroplast respiratory chain. The immediate electron acceptor for the enzyme in this species is believed to be plastoquinone. Couples the redox reaction to proton translocation, and thus conserves the redox energy in a proton gradient. The chain is NAD(P)H-quinone oxidoreductase subunit I, chloroplastic from Illicium oligandrum (Star anise).